The following is a 301-amino-acid chain: Peptidyl-prolyl cis-trans isomerase E (301 aa).

The region spanning 5–83 (KRVLYVGGLA…GRTIRVNLAK (79 aa)) is the RRM domain. Residues S91, S97, and S119 each carry the phosphoserine modification. The disordered stretch occupies residues 107 to 140 (GKTLEENKEEEGSEPPKAETQEGEPAAKKARSNP). The region spanning 143–299 (YMDIKIGNKP…QKVIIADCGE (157 aa)) is the PPIase cyclophilin-type domain.

It belongs to the cyclophilin-type PPIase family. PPIase E subfamily. In terms of assembly, identified in the spliceosome C complex. Component of the XAB2 complex, a multimeric protein complex composed of XAB2, PRPF19, AQR, ZNF830, ISY1, and PPIE. Identified in a pentameric intron-binding (IB) complex composed of AQR, XAB2, ISY1, ZNF830 and PPIE that is incorporated into the spliceosome as a preassembled complex. The IB complex does not contain PRPF19. Interacts (via RNA-binding domain) with KMT2A (via the third PHD-type zinc-finger).

It localises to the nucleus. The enzyme catalyses [protein]-peptidylproline (omega=180) = [protein]-peptidylproline (omega=0). Functionally, involved in pre-mRNA splicing as component of the spliceosome. Combines RNA-binding and PPIase activities. Binds mRNA and has a preference for single-stranded RNA molecules with poly-A and poly-U stretches, suggesting it binds to the poly(A)-region in the 3'-UTR of mRNA molecules. Catalyzes the cis-trans isomerization of proline imidic peptide bonds in proteins. Inhibits KMT2A activity; this requires proline isomerase activity. This chain is Peptidyl-prolyl cis-trans isomerase E (PPIE), found in Pongo abelii (Sumatran orangutan).